Reading from the N-terminus, the 450-residue chain is Beclin-1 (450 aa).

M1 carries the N-acetylmethionine modification. Phosphoserine occurs at positions 15 and 30. Residues 48 to 72 (TTAQAKPGETQEEETNSGEEPFIET) are disordered. Phosphoserine; by AMPK is present on residues S90, S93, and S96. The BH3 signature appears at 108–127 (TMENLSRRLKVTGDLFDIMS). Positions 112-159 (LSRRLKVTGDLFDIMSGQTDVDHPLCEECTDTLLDQLDTQLNVTENEC) are interaction with BCL2 and BCL2L1. Phosphothreonine; by DAPK1 is present on T119. Residues 142–269 (DTLLDQLDTQ…QLDKLKKTNV (128 aa)) adopt a coiled-coil conformation. Residues 245-450 (DELKSVENQM…AWVSSQFYNK (206 aa)) are evolutionary conserved domain (ECD). Residues K402 and K437 each participate in a glycyl lysine isopeptide (Lys-Gly) (interchain with G-Cter in ubiquitin) cross-link. Residues 425 to 450 (WTKALKFMLTNLKWGLAWVSSQFYNK) form a required for membrane-association region.

The protein belongs to the beclin family. A homodimeric form is proposed to exist; this metastable form readily transits to ATG14- or UVRAG-containing complexes with BECN1:UVRAG being more stable than BECN1:ATG14. Component of the PI3K (PI3KC3/PI3K-III/class III phosphatidylinositol 3-kinase) complex the core of which is composed of the catalytic subunit PIK3C3, the regulatory subunit PIK3R4 and BECN1 associating with additional regulatory/auxiliary subunits to form alternative complex forms. Alternative complex forms containing a fourth regulatory subunit in a mutually exclusive manner are PI3K complex I (PI3KC3-C1) containing ATG14, and PI3K complex II (PI3KC3-C2) containing UVRAG. PI3KC3-C1 displays a V-shaped architecture with PIK3R4 serving as a bridge between PIK3C3 and the ATG14:BECN1 subcomplex. Both, PI3KC3-C1 and PI3KC3-C2, can associate with further regulatory subunits, such as RUBCN, SH3GLB1/Bif-1 and AMBRA1. PI3KC3-C1 probably associates with PIK3CB. Forms a complex with PPP2CA and AMBRA1; AMBRA1 and BECN1 components of the complex regulate MYC stability via different pathways. Component of the complex, at least composed of LRPPRC, BECN1 and BCL2; the interactions prevent BECN1 from forming an autophagy-inducing complex with PIK3C3. Interacts with AMBRA1, GOPC, GRID2. Interacts with BCL2 and BCL2L1 isoform Bcl-X(L); the interaction inhibits BECN1 function in promoting autophagy by interfering with the formation of the PI3K complex. Interacts with cytosolic HMGB1; inhibits the interaction of BECN1 and BCL2 leading to promotion of autophagy. Interacts with USP10, USP13, VMP1, DAPK1, RAB39A. Interacts with the poly-Gln domain of ATXN3; the interaction causes deubiquitination at Lys-402 and stabilizes BECN1. Interacts with SLAMF1. Interacts with TRIM5; the interaction causes activation of BECN1 by causing its dissociation from its inhibitors BCL2 and TAB2. Interacts with active ULK1 (phosphorylated on 'Ser-317') and MEFV simultaneously. Interacts with WDR81 and WDR91; negatively regulates the PI3 kinase/PI3K activity associated with endosomal membranes. Interacts with LAPTM4B; competes with EGFR for LAPTM4B binding; regulates EGFR activity. Interacts with TRIM50. Interacts with TRIM16. Interacts with ATG14; this interaction is increased in the absence of TMEM39A. Interacts with WASHC1; preventing interaction with AMBRA1 and the DCX(AMBRA1) complex and subsequent ubiquitination. Interacts with TRIM17. Interacts with BCL2L10/BCL-B (via BH1 domain). Interacts with SH3BGRL. Interacts with IRGM; enhancing BECN1-interacting partners and influencing the composition of the BECN1 complex. Interacts with ARMC3. Interacts with LRPPRC. Post-translationally, phosphorylation at Thr-119 by DAPK1 reduces its interaction with BCL2 and BCL2L1 and promotes induction of autophagy. In response to autophagic stimuli, phosphorylated at serine residues by AMPK in an ATG14-dependent manner, and this phosphorylation is critical for maximally efficient autophagy. In terms of processing, polyubiquitinated by NEDD4, both with 'Lys-11'- and 'Lys-63'-linkages. 'Lys-11'-linked polyubiquitination leads to degradation and is enhanced when the stabilizing interaction partner VPS34 is depleted. Deubiquitinated by USP10 and USP13, leading to stabilize the PIK3C3/VPS34-containing complexes. Polyubiquitinated at Lys-402 with 'Lys-48'-linkages. 'Lys-48'-linked polyubiquitination of Lys-402 leads to degradation. Deubiquitinated by ATXN3, leading to stabilization. Ubiquitinated at Lys-437 via 'Lys-63'-linkage by the DCX(AMBRA1) complex, thereby increasing the association between BECN1 and PIK3C3 to promote PIK3C3 activity. 'Lys-48'-linked ubiquitination by RNF216 leads to proteasomal degradation and autophagy inhibition. Proteolytically processed by caspases including CASP8 and CASP3; the C-terminal fragments lack autophagy-inducing capacity and are proposed to induce apoptosis. Thus the cleavage is proposed to be an determinant to switch from autophagy to apoptosis pathways affecting cellular homeostasis including viral infections and survival of tumor cells.

It is found in the cytoplasm. The protein localises to the golgi apparatus. The protein resides in the trans-Golgi network membrane. It localises to the endosome membrane. Its subcellular location is the endoplasmic reticulum membrane. It is found in the mitochondrion membrane. The protein localises to the cytoplasmic vesicle. The protein resides in the autophagosome. It localises to the mitochondrion. Its subcellular location is the nucleus. Its function is as follows. Plays a central role in autophagy. Acts as a core subunit of the PI3K complex that mediates formation of phosphatidylinositol 3-phosphate; different complex forms are believed to play a role in multiple membrane trafficking pathways: PI3KC3-C1 is involved in initiation of autophagosomes and PI3KC3-C2 in maturation of autophagosomes and endocytosis. Involved in regulation of degradative endocytic trafficking and required for the abscission step in cytokinesis, probably in the context of PI3KC3-C2. Essential for the formation of PI3KC3-C2 but not PI3KC3-C1 PI3K complex forms. Involved in endocytosis. May play a role in antiviral host defense. Beclin-1-C 35 kDa localized to mitochondria can promote apoptosis; it induces the mitochondrial translocation of BAX and the release of proapoptotic factors. The polypeptide is Beclin-1 (BECN1) (Pongo abelii (Sumatran orangutan)).